The chain runs to 348 residues: Phosphoribosylformylglycinamidine cyclo-ligase (348 aa).

The protein belongs to the AIR synthase family.

The protein resides in the cytoplasm. The enzyme catalyses 2-formamido-N(1)-(5-O-phospho-beta-D-ribosyl)acetamidine + ATP = 5-amino-1-(5-phospho-beta-D-ribosyl)imidazole + ADP + phosphate + H(+). It functions in the pathway purine metabolism; IMP biosynthesis via de novo pathway; 5-amino-1-(5-phospho-D-ribosyl)imidazole from N(2)-formyl-N(1)-(5-phospho-D-ribosyl)glycinamide: step 2/2. This is Phosphoribosylformylglycinamidine cyclo-ligase from Aromatoleum aromaticum (strain DSM 19018 / LMG 30748 / EbN1) (Azoarcus sp. (strain EbN1)).